The sequence spans 108 residues: uncharacterized protein (108 aa).

Helical transmembrane passes span 24 to 44, 55 to 75, and 88 to 108; these read LWITLVLTLFFTIVEIVGGLL, AHMASDVLALGLSMIALYLAM, and RFEIITSFLNGLTLAIISIGI.

This sequence to cation A.eutrophus efflux system protein CzcD.

It is found in the cell membrane. This is an uncharacterized protein from Geobacillus stearothermophilus (Bacillus stearothermophilus).